Consider the following 213-residue polypeptide: Ribosomal RNA small subunit methyltransferase G (213 aa).

S-adenosyl-L-methionine contacts are provided by residues glycine 75, phenylalanine 80, 128-129 (IE), and arginine 144.

The protein belongs to the methyltransferase superfamily. RNA methyltransferase RsmG family.

It localises to the cytoplasm. The enzyme catalyses guanosine(527) in 16S rRNA + S-adenosyl-L-methionine = N(7)-methylguanosine(527) in 16S rRNA + S-adenosyl-L-homocysteine. Specifically methylates the N7 position of guanine in position 527 of 16S rRNA. The chain is Ribosomal RNA small subunit methyltransferase G from Brucella anthropi (strain ATCC 49188 / DSM 6882 / CCUG 24695 / JCM 21032 / LMG 3331 / NBRC 15819 / NCTC 12168 / Alc 37) (Ochrobactrum anthropi).